Reading from the N-terminus, the 241-residue chain is Copper transport protein CTR3 (241 aa).

The Lumenal portion of the chain corresponds to 1–41 (MNMGGSSSTAAKKATCKISMLWNWYTIDTCFIARSWRNDTK). Residues 42-62 (GKFAGSCIGCFALVVVAQWLT) traverse the membrane as a helical segment. The Cytoplasmic segment spans residues 63 to 159 (RFSRQFDVEL…SCCTLITPVD (97 aa)). The chain crosses the membrane as a helical span at residues 160-180 (LYPTFLDHMIRVTIFVLQWGL). The Lumenal portion of the chain corresponds to 181–182 (SY). Residues 183–203 (IIMLLFMYYNGYIIISCLIGA) form a helical membrane-spanning segment. Topologically, residues 204–241 (IVGRFIFCYEPLGSLGANGSAQGTVSYDKESDDRKCCL) are cytoplasmic.

The protein belongs to the copper transporter (Ctr) (TC 1.A.56) family. SLC31A subfamily.

The protein localises to the cytoplasmic vesicle membrane. Its function is as follows. Required for high affinity copper (probably reduced Cu I) transport into the cell. The protein is Copper transport protein CTR3 (CTR3) of Saccharomyces cerevisiae (strain ATCC 204508 / S288c) (Baker's yeast).